Reading from the N-terminus, the 317-residue chain is Small ribosomal subunit biogenesis GTPase RsgA (317 aa).

Positions 88-249 (DQYKSKLFAA…LIDSPGFQEF (162 aa)) constitute a CP-type G domain. GTP contacts are provided by residues 136–139 (NKID) and 190–198 (GQSGMGKST). The Zn(2+) site is built by C273, C278, H280, and C286.

The protein belongs to the TRAFAC class YlqF/YawG GTPase family. RsgA subfamily. Monomer. Associates with 30S ribosomal subunit, binds 16S rRNA. The cofactor is Zn(2+).

It is found in the cytoplasm. In terms of biological role, one of several proteins that assist in the late maturation steps of the functional core of the 30S ribosomal subunit. Helps release RbfA from mature subunits. May play a role in the assembly of ribosomal proteins into the subunit. Circularly permuted GTPase that catalyzes slow GTP hydrolysis, GTPase activity is stimulated by the 30S ribosomal subunit. The sequence is that of Small ribosomal subunit biogenesis GTPase RsgA from Paraburkholderia phymatum (strain DSM 17167 / CIP 108236 / LMG 21445 / STM815) (Burkholderia phymatum).